Reading from the N-terminus, the 116-residue chain is Large ribosomal subunit protein eL18 (116 aa).

Belongs to the eukaryotic ribosomal protein eL18 family. In terms of assembly, part of the 50S ribosomal subunit. Interacts weakly with proteins L4 and L15. Has been cross-linked to L4.

Functionally, stabilizes the tertiary rRNA structure within the 23S rRNA domain (domain II) to which it binds. The sequence is that of Large ribosomal subunit protein eL18 (rpl18e) from Haloarcula marismortui (strain ATCC 43049 / DSM 3752 / JCM 8966 / VKM B-1809) (Halobacterium marismortui).